Reading from the N-terminus, the 182-residue chain is Peptidyl-tRNA hydrolase (182 aa).

A tRNA-binding site is contributed by tyrosine 14. Residue histidine 19 is the Proton acceptor of the active site. Positions 65, 67, and 113 each coordinate tRNA.

The protein belongs to the PTH family. In terms of assembly, monomer.

The protein resides in the cytoplasm. It carries out the reaction an N-acyl-L-alpha-aminoacyl-tRNA + H2O = an N-acyl-L-amino acid + a tRNA + H(+). In terms of biological role, hydrolyzes ribosome-free peptidyl-tRNAs (with 1 or more amino acids incorporated), which drop off the ribosome during protein synthesis, or as a result of ribosome stalling. Its function is as follows. Catalyzes the release of premature peptidyl moieties from peptidyl-tRNA molecules trapped in stalled 50S ribosomal subunits, and thus maintains levels of free tRNAs and 50S ribosomes. This is Peptidyl-tRNA hydrolase from Rickettsia peacockii (strain Rustic).